The chain runs to 139 residues: ATP synthase epsilon chain (139 aa).

The protein belongs to the ATPase epsilon chain family. As to quaternary structure, F-type ATPases have 2 components, CF(1) - the catalytic core - and CF(0) - the membrane proton channel. CF(1) has five subunits: alpha(3), beta(3), gamma(1), delta(1), epsilon(1). CF(0) has three main subunits: a, b and c.

The protein resides in the cell inner membrane. In terms of biological role, produces ATP from ADP in the presence of a proton gradient across the membrane. This Pseudomonas entomophila (strain L48) protein is ATP synthase epsilon chain.